Here is a 270-residue protein sequence, read N- to C-terminus: Putative tRNA (cytidine(32)/guanosine(34)-2'-O)-methyltransferase (270 aa).

Residues Gly53, Trp55, Asp78, Asp94, and Asp119 each coordinate S-adenosyl-L-methionine. Lys159 functions as the Proton acceptor in the catalytic mechanism.

It belongs to the class I-like SAM-binding methyltransferase superfamily. RNA methyltransferase RlmE family. TRM7 subfamily.

The protein resides in the cytoplasm. The catalysed reaction is cytidine(32)/guanosine(34) in tRNA + 2 S-adenosyl-L-methionine = 2'-O-methylcytidine(32)/2'-O-methylguanosine(34) in tRNA + 2 S-adenosyl-L-homocysteine + 2 H(+). Methylates the 2'-O-ribose of nucleotides at positions 32 and 34 of the tRNA anticodon loop of substrate tRNAs. The protein is Putative tRNA (cytidine(32)/guanosine(34)-2'-O)-methyltransferase (fsjA) of Dictyostelium discoideum (Social amoeba).